A 524-amino-acid polypeptide reads, in one-letter code: uncharacterized protein (524 aa).

The disordered stretch occupies residues 1–65 (MSDPFFTRPE…IDEENEDTYE (65 aa)). Residues 21-32 (SKREKENQKLER) are compositionally biased toward basic and acidic residues. The segment covering 51-64 (GFEDEIDEENEDTY) has biased composition (acidic residues). WD repeat units lie at residues 131–176 (IETA…DTEN), 206–245 (DHVK…PQHC), 248–287 (HHRD…YIET), 290–329 (GHQD…QLVF), 342–380 (YMEG…PLFT), 409–448 (PQPR…RSFE), and 457–503 (SVYG…PNSG).

It is found in the nucleus. This is an uncharacterized protein from Schizosaccharomyces pombe (strain 972 / ATCC 24843) (Fission yeast).